A 645-amino-acid chain; its full sequence is Exoribonuclease 2 (645 aa).

Residues 191–517 form the RNB domain; the sequence is REDLTELNFI…MNHRLLKALI (327 aa). An S1 motif domain is found at 563-645; the sequence is HIRYSAEIID…DNRSIIAKIV (83 aa).

The protein belongs to the RNR ribonuclease family. RNase II subfamily.

It is found in the cytoplasm. It carries out the reaction Exonucleolytic cleavage in the 3'- to 5'-direction to yield nucleoside 5'-phosphates.. In terms of biological role, involved in mRNA degradation. Hydrolyzes single-stranded polyribonucleotides processively in the 3' to 5' direction. In Baumannia cicadellinicola subsp. Homalodisca coagulata, this protein is Exoribonuclease 2.